Consider the following 409-residue polypeptide: Elongation factor Tu (409 aa).

The tr-type G domain maps to 10-214 (KPHVNIGTIG…AVDSYIPDPE (205 aa)). Residues 19 to 26 (GHVDHGKT) form a G1 region. 19-26 (GHVDHGKT) is a GTP binding site. A Mg(2+)-binding site is contributed by Thr-26. The tract at residues 60–64 (GITIN) is G2. The tract at residues 81–84 (DCPG) is G3. GTP is bound by residues 81–85 (DCPGH) and 136–139 (NKED). Residues 136–139 (NKED) form a G4 region. A G5 region spans residues 174 to 176 (SGL).

In terms of assembly, monomer.

The protein resides in the cytoplasm. The enzyme catalyses GTP + H2O = GDP + phosphate + H(+). Functionally, GTP hydrolase that promotes the GTP-dependent binding of aminoacyl-tRNA to the A-site of ribosomes during protein biosynthesis. In Nostoc sp. (strain PCC 7120 / SAG 25.82 / UTEX 2576), this protein is Elongation factor Tu.